The following is a 335-amino-acid chain: Cytochrome c biogenesis protein CcsA (335 aa).

A run of 8 helical transmembrane segments spans residues 15–35 (FLLL…PNVT), 36–56 (WLPT…ATLL), 68–88 (LSNL…IHLV), 97–117 (LVGV…ALSL), 142–162 (VMML…AFLV), 243–263 (IIGL…VWAN), 278–298 (WALI…TKGW), and 304–324 (AILA…VNLL).

It belongs to the CcmF/CycK/Ccl1/NrfE/CcsA family. As to quaternary structure, may interact with ccs1.

Its subcellular location is the cellular thylakoid membrane. In terms of biological role, required during biogenesis of c-type cytochromes (cytochrome c6 and cytochrome f) at the step of heme attachment. The polypeptide is Cytochrome c biogenesis protein CcsA (Crocosphaera subtropica (strain ATCC 51142 / BH68) (Cyanothece sp. (strain ATCC 51142))).